Consider the following 760-residue polypeptide: Exostosin-1 (760 aa).

The Cytoplasmic portion of the chain corresponds to 1–6; sequence MQAKKR. Residues 7 to 25 traverse the membrane as a helical; Signal-anchor for type II membrane protein segment; it reads YILVFVSCAFLAYAYFGGY. Topologically, residues 26 to 760 are lumenal; the sequence is RLKVSPLRPR…KYRQIELVGS (735 aa). 2 N-linked (GlcNAc...) asparagine glycosylation sites follow: asparagine 71 and asparagine 327. Residue arginine 437 participates in UDP-N-acetyl-alpha-D-glucosamine binding. An N-linked (GlcNAc...) asparagine glycan is attached at asparagine 476. The interval 540–560 is disordered; sequence LGGSTRSQGAGPTSQTTEGRP. A compositionally biased stretch (polar residues) spans 541–560; sequence GGSTRSQGAGPTSQTTEGRP. UDP-N-acetyl-alpha-D-glucosamine contacts are provided by arginine 565, aspartate 581, glutamate 582, aspartate 583, glutamate 669, aspartate 670, and arginine 713. Residue aspartate 583 coordinates Mn(2+). Cysteine 668 and cysteine 716 are disulfide-bonded. Aspartate 670 is an active-site residue.

It belongs to the glycosyltransferase 47 family. Interacts with sau. Mn(2+) serves as cofactor. As to expression, ubiquitously expressed in early embryos. Later (in stage 10 embryos), it is expressed at higher level in the nervous system. Ubiquitously expressed in wing imaginal disk.

It localises to the endoplasmic reticulum membrane. It is found in the golgi apparatus membrane. It catalyses the reaction 3-O-{[(1-&gt;4)-beta-D-GlcA-(1-&gt;4)-alpha-D-GlcNAc](n)-(1-&gt;4)-beta-D-GlcA-(1-&gt;3)-beta-D-Gal-(1-&gt;3)-beta-D-Gal-(1-&gt;4)-beta-D-Xyl}-L-seryl-[protein] + UDP-N-acetyl-alpha-D-glucosamine = 3-O-{alpha-D-GlcNAc-[(1-&gt;4)-beta-D-GlcA-(1-&gt;4)-alpha-D-GlcNAc](n)-(1-&gt;4)-beta-D-GlcA-(1-&gt;3)-beta-D-Gal-(1-&gt;3)-beta-D-Gal-(1-&gt;4)-beta-D-Xyl}-L-seryl-[protein] + UDP + H(+). It carries out the reaction 3-O-{alpha-D-GlcNAc-[(1-&gt;4)-beta-D-GlcA-(1-&gt;4)-alpha-D-GlcNAc](n)-(1-&gt;4)-beta-D-GlcA-(1-&gt;3)-beta-D-Gal-(1-&gt;3)-beta-D-Gal-(1-&gt;4)-beta-D-Xyl}-L-seryl-[protein] + UDP-alpha-D-glucuronate = 3-O-{[(1-&gt;4)-beta-D-GlcA-(1-&gt;4)-alpha-D-GlcNAc](n+1)-(1-&gt;4)-beta-D-GlcA-(1-&gt;3)-beta-D-Gal-(1-&gt;3)-beta-D-Gal-(1-&gt;4)-beta-D-Xyl}-L-seryl-[protein] + UDP + H(+). Its pathway is protein modification; protein glycosylation. It participates in glycan metabolism; heparan sulfate biosynthesis. The protein operates within glycan metabolism; heparin biosynthesis. Glycosyltransferase required for the biosynthesis of heparan-sulfate and responsible for the alternating addition of beta-1-4-linked glucuronic acid (GlcA) and alpha-1-4-linked N-acetylglucosamine (GlcNAc) units to nascent heparan sulfate chains. Botv is the trigger of heparan sulfate chain initiation and polymerization takes place by a complex of ttv and sotv. Plays a central role in the diffusion of morphogens hedgehog (hh), wingless (wg) and decapentaplegic (dpp) via its role in heparan sulfate proteoglycans (HSPGs) biosynthesis which are required for movement of hh, dpp and wg morphogens. The sequence is that of Exostosin-1 (ttv) from Drosophila melanogaster (Fruit fly).